A 335-amino-acid chain; its full sequence is Nucleoid-associated protein YejK (335 aa).

Belongs to the YejK family.

The protein resides in the cytoplasm. Its subcellular location is the nucleoid. This Shigella sonnei (strain Ss046) protein is Nucleoid-associated protein YejK.